A 247-amino-acid polypeptide reads, in one-letter code: Flavin-dependent thymidylate synthase (247 aa).

Positions 1 to 237 (MRVRLLEATE…PHTFEYYDAE (237 aa)) constitute a ThyX domain. Residues 85-88 (QLTR), 98-100 (SMR), and arginine 176 each bind dUMP. 88–90 (RHR) contacts FAD. Positions 88 to 98 (RHRHASFDVQS) match the ThyX motif motif. Residues 192–194 (NPR) and histidine 198 contribute to the FAD site. Residue arginine 203 coordinates dUMP. Arginine 203 serves as the catalytic Involved in ionization of N3 of dUMP, leading to its activation.

This sequence belongs to the thymidylate synthase ThyX family. As to quaternary structure, homotetramer. Requires FAD as cofactor.

It catalyses the reaction dUMP + (6R)-5,10-methylene-5,6,7,8-tetrahydrofolate + NADPH + H(+) = dTMP + (6S)-5,6,7,8-tetrahydrofolate + NADP(+). Its pathway is pyrimidine metabolism; dTTP biosynthesis. Its function is as follows. Catalyzes the reductive methylation of 2'-deoxyuridine-5'-monophosphate (dUMP) to 2'-deoxythymidine-5'-monophosphate (dTMP) while utilizing 5,10-methylenetetrahydrofolate (mTHF) as the methyl donor, and NADPH and FADH(2) as the reductant. This chain is Flavin-dependent thymidylate synthase, found in Halobacterium salinarum (strain ATCC 700922 / JCM 11081 / NRC-1) (Halobacterium halobium).